The sequence spans 345 residues: Fibronectin type 3 and ankyrin repeat domains protein 1 (345 aa).

One can recognise a Fibronectin type-III domain in the interval 8-108 (PPSKPHPPVV…LVSVSTTREP (101 aa)). ANK repeat units lie at residues 109–139 (ISSE…KVDV), 143–172 (FGFT…DVNL), 176–205 (SGKD…SWQA), 209–238 (GGCT…EVDV), 243–273 (SGWT…NVNV), and 277–306 (NGKT…DASV).

Interacts with COPS5; regulates the phosphorylation of JUN and the transcriptional activity of AP-1. Interacts with RYBP; may prevent the ubiquitin-mediated proteasomal degradation of FANK1. In terms of processing, polyubiquitinated. Polyubiquitination leads to proteasomal degradation. In terms of tissue distribution, mostly restricted to testis.

The protein localises to the nucleus. It localises to the cytoplasm. The protein resides in the cytosol. It is found in the cytoskeleton. Its subcellular location is the cilium basal body. The protein localises to the cell projection. It localises to the cilium. Functionally, through the activation of JUN and AP-1-mediated transcription, may regulate apoptosis. This is Fibronectin type 3 and ankyrin repeat domains protein 1 from Homo sapiens (Human).